We begin with the raw amino-acid sequence, 215 residues long: ATP-dependent dethiobiotin synthetase BioD (215 aa).

13 to 18 (DIGKTV) provides a ligand contact to ATP. T17 contributes to the Mg(2+) binding site. Residue K38 is part of the active site. T42 is a binding site for substrate. ATP contacts are provided by residues D50, 115–118 (EGAG), and 175–176 (NH). Mg(2+) contacts are provided by D50 and E115.

Belongs to the dethiobiotin synthetase family. In terms of assembly, homodimer. Mg(2+) is required as a cofactor.

The protein localises to the cytoplasm. The catalysed reaction is (7R,8S)-7,8-diammoniononanoate + CO2 + ATP = (4R,5S)-dethiobiotin + ADP + phosphate + 3 H(+). It functions in the pathway cofactor biosynthesis; biotin biosynthesis; biotin from 7,8-diaminononanoate: step 1/2. Its function is as follows. Catalyzes a mechanistically unusual reaction, the ATP-dependent insertion of CO2 between the N7 and N8 nitrogen atoms of 7,8-diaminopelargonic acid (DAPA, also called 7,8-diammoniononanoate) to form a ureido ring. The protein is ATP-dependent dethiobiotin synthetase BioD of Neisseria gonorrhoeae (strain NCCP11945).